Reading from the N-terminus, the 257-residue chain is Imidazole glycerol phosphate synthase subunit HisF (257 aa).

Residues Asp11 and Asp130 contribute to the active site.

The protein belongs to the HisA/HisF family. In terms of assembly, heterodimer of HisH and HisF.

It localises to the cytoplasm. The enzyme catalyses 5-[(5-phospho-1-deoxy-D-ribulos-1-ylimino)methylamino]-1-(5-phospho-beta-D-ribosyl)imidazole-4-carboxamide + L-glutamine = D-erythro-1-(imidazol-4-yl)glycerol 3-phosphate + 5-amino-1-(5-phospho-beta-D-ribosyl)imidazole-4-carboxamide + L-glutamate + H(+). It participates in amino-acid biosynthesis; L-histidine biosynthesis; L-histidine from 5-phospho-alpha-D-ribose 1-diphosphate: step 5/9. Its function is as follows. IGPS catalyzes the conversion of PRFAR and glutamine to IGP, AICAR and glutamate. The HisF subunit catalyzes the cyclization activity that produces IGP and AICAR from PRFAR using the ammonia provided by the HisH subunit. In Aeromonas salmonicida (strain A449), this protein is Imidazole glycerol phosphate synthase subunit HisF.